Reading from the N-terminus, the 367-residue chain is Aurora kinase (367 aa).

Polar residues-rich tracts occupy residues M1 to I29 and H37 to I48. Residues M1 to V52 are disordered. S5 bears the Phosphoserine; by autocatalysis mark. S76 is subject to Phosphoserine. The region spanning F104 to I355 is the Protein kinase domain. ATP contacts are provided by residues L110–V118 and K133. Residue D227 is the Proton acceptor of the active site. At T260 the chain carries Phosphothreonine; by autocatalysis.

This sequence belongs to the protein kinase superfamily. Ser/Thr protein kinase family. Aurora subfamily. Component of the CPC complex at least composed of IPL1, BIR1 and SLI15.

It is found in the nucleus. It localises to the cytoplasm. The protein localises to the cytoskeleton. The protein resides in the spindle. Its subcellular location is the chromosome. It is found in the centromere. It localises to the kinetochore. The enzyme catalyses L-seryl-[protein] + ATP = O-phospho-L-seryl-[protein] + ADP + H(+). The catalysed reaction is L-threonyl-[protein] + ATP = O-phospho-L-threonyl-[protein] + ADP + H(+). Its function is as follows. Component of the chromosomal passenger complex (CPC), a complex that acts as a key regulator of chromosome segregation and cytokinesis. Has a role in error-correction of aberrent kinetochore-microtubule attachments to ensure that sister kinetochores become bioriented and connect to opposite poles by promoting spindle assembly checkpoint signaling. Acts in opposition to the phosphatase PP1. Not required for kinetochore detachment from microtubules during replication of centromeric DNA. Phosphorylates histone H3 to form H3S10ph during mitosis and meiosis. Phosphorylates CNN1, which contributes to the enrichment of CNN1 on anaphase kinetochores. Phosphorylates RGD1. This chain is Aurora kinase (IPL1), found in Saccharomyces cerevisiae (strain ATCC 204508 / S288c) (Baker's yeast).